The primary structure comprises 145 residues: Cytochrome c2 (145 aa).

A signal peptide spans 1–21; that stretch reads MKFQVKALAAIAAFAALPALA. Gln-22 is subject to Pyrrolidone carboxylic acid. Positions 36, 39, 40, and 121 each coordinate heme c.

It belongs to the cytochrome c family. Binds 1 heme c group covalently per subunit.

It is found in the periplasm. In terms of biological role, cytochrome c2 is found mainly in purple, non-sulfur, photosynthetic bacteria where it functions as the electron donor to the oxidized bacteriochlorophyll in the photophosphorylation pathway. However, it may also have a role in the respiratory chain and is found in some non-photosynthetic bacteria. In Cereibacter sphaeroides (strain ATCC 17023 / DSM 158 / JCM 6121 / CCUG 31486 / LMG 2827 / NBRC 12203 / NCIMB 8253 / ATH 2.4.1.) (Rhodobacter sphaeroides), this protein is Cytochrome c2 (cycA).